A 209-amino-acid polypeptide reads, in one-letter code: Zinc finger SWIM domain-containing protein sws1 (209 aa).

The span at 1–30 (MQQGHFTSNSYHSKTLNSSSLPVSSKFSHT) shows a compositional bias: polar residues. The disordered stretch occupies residues 1–33 (MQQGHFTSNSYHSKTLNSSSLPVSSKFSHTNDP). The SWIM-type zinc finger occupies 143–203 (TTIDLKYWYC…HILAASILRA (61 aa)).

As to quaternary structure, interacts with rdl1, rlp1 and srs2.

It is found in the cytoplasm. It localises to the nucleus. The protein resides in the nucleoplasm. Its function is as follows. Involved in early stages of the homologous recombination repair (HRR) pathway of double-stranded DNA breaks arising during DNA replication or induced by DNA-damaging agents. In Schizosaccharomyces pombe (strain 972 / ATCC 24843) (Fission yeast), this protein is Zinc finger SWIM domain-containing protein sws1 (sws1).